The primary structure comprises 223 residues: RNA-free ribonuclease P (223 aa).

Belongs to the HARP family.

The enzyme catalyses Endonucleolytic cleavage of RNA, removing 5'-extranucleotides from tRNA precursor.. Its function is as follows. RNA-free RNase P that catalyzes the removal of the 5'-leader sequence from pre-tRNA to produce the mature 5'-terminus. This Methanococcus maripaludis (strain C5 / ATCC BAA-1333) protein is RNA-free ribonuclease P.